The chain runs to 476 residues: Replication factor C large subunit (476 aa).

Gly43 to Thr50 is a binding site for ATP. A disordered region spans residues Leu435 to Phe476.

The protein belongs to the activator 1 small subunits family. RfcL subfamily. In terms of assembly, heteromultimer composed of small subunits (RfcS) and large subunits (RfcL).

Functionally, part of the RFC clamp loader complex which loads the PCNA sliding clamp onto DNA. This is Replication factor C large subunit from Methanocorpusculum labreanum (strain ATCC 43576 / DSM 4855 / Z).